The primary structure comprises 248 residues: PF03932 family protein CutC (248 aa).

This sequence belongs to the CutC family. Homodimer.

Its subcellular location is the cytoplasm. This Escherichia coli O17:K52:H18 (strain UMN026 / ExPEC) protein is PF03932 family protein CutC.